The primary structure comprises 122 residues: Putative iron-sulfur cluster insertion protein ErpA (122 aa).

The iron-sulfur cluster site is built by cysteine 50, cysteine 114, and cysteine 116.

It belongs to the HesB/IscA family. As to quaternary structure, homodimer. Requires iron-sulfur cluster as cofactor.

Its function is as follows. Required for insertion of 4Fe-4S clusters. In Bordetella petrii (strain ATCC BAA-461 / DSM 12804 / CCUG 43448), this protein is Putative iron-sulfur cluster insertion protein ErpA.